The following is a 649-amino-acid chain: Threonine--tRNA ligase (649 aa).

A TGS domain is found at 1–60 (MHVVLPDGKQLELPMGATALDAASAIGPRLAQDALAATANGELVDLMTPLPDGASITLIT). Residues 248–544 (DHRKLGRELE…LIEHYAGDFP (297 aa)) form a catalytic region. Residues Cys-341, His-392, and His-521 each coordinate Zn(2+).

Belongs to the class-II aminoacyl-tRNA synthetase family. Homodimer. It depends on Zn(2+) as a cofactor.

It is found in the cytoplasm. The enzyme catalyses tRNA(Thr) + L-threonine + ATP = L-threonyl-tRNA(Thr) + AMP + diphosphate + H(+). Functionally, catalyzes the attachment of threonine to tRNA(Thr) in a two-step reaction: L-threonine is first activated by ATP to form Thr-AMP and then transferred to the acceptor end of tRNA(Thr). Also edits incorrectly charged L-seryl-tRNA(Thr). This Deinococcus deserti (strain DSM 17065 / CIP 109153 / LMG 22923 / VCD115) protein is Threonine--tRNA ligase.